We begin with the raw amino-acid sequence, 622 residues long: Glutamyl-tRNA(Gln) amidotransferase subunit B, mitochondrial (622 aa).

The transit peptide at 1-54 directs the protein to the mitochondrion; it reads MSRIPTRELGRYLLQGQICQRGCVASSVSKSRAKQLGRHPLLPHDRHQPTQARH. The interval 30 to 67 is disordered; it reads KSRAKQLGRHPLLPHDRHQPTQARHAHTVTTTATPTQL. The span at 57-67 shows a compositional bias: low complexity; sequence TVTTTATPTQL.

This sequence belongs to the GatB/GatE family. GatB subfamily. Subunit of the heterotrimeric GatCAB amidotransferase (AdT) complex, composed of A, B and C subunits.

It is found in the mitochondrion. The catalysed reaction is L-glutamyl-tRNA(Gln) + L-glutamine + ATP + H2O = L-glutaminyl-tRNA(Gln) + L-glutamate + ADP + phosphate + H(+). Its function is as follows. Allows the formation of correctly charged Gln-tRNA(Gln) through the transamidation of misacylated Glu-tRNA(Gln) in the mitochondria. The reaction takes place in the presence of glutamine and ATP through an activated gamma-phospho-Glu-tRNA(Gln). The sequence is that of Glutamyl-tRNA(Gln) amidotransferase subunit B, mitochondrial from Verticillium alfalfae (strain VaMs.102 / ATCC MYA-4576 / FGSC 10136) (Verticillium wilt of alfalfa).